Here is a 510-residue protein sequence, read N- to C-terminus: Maturase K (510 aa).

This sequence belongs to the intron maturase 2 family. MatK subfamily.

The protein localises to the plastid. It localises to the chloroplast. Functionally, usually encoded in the trnK tRNA gene intron. Probably assists in splicing its own and other chloroplast group II introns. This Gratiola officinalis (Hedgehyssop) protein is Maturase K.